A 611-amino-acid polypeptide reads, in one-letter code: Phosphatidylinositol 3,4,5-trisphosphate 3-phosphatase and protein-tyrosine-phosphatase PTEN2A (611 aa).

Disordered stretches follow at residues 1–42 (MSSE…GVAS) and 87–109 (GIRLSPKSPQTNDTTTEGTSSAT). The residue at position 91 (S91) is a Phosphoserine. Residues 100–109 (TTTEGTSSAT) are compositionally biased toward low complexity. Residues 145–324 (RRYQEGGFDL…KYFERILTYF (180 aa)) form the Phosphatase tensin-type domain. The active-site Phosphocysteine intermediate is the C263. Residues 331–458 (GRRCMLRGFR…FMVEVVLADI (128 aa)) enclose the C2 tensin-type domain. Polar residues predominate over residues 462–486 (IPTNPSSETASKTPEETSAANSSPV). The segment at 462–589 (IPTNPSSETA…VNASSSSESE (128 aa)) is disordered. Over residues 495-507 (PDKETENPDKDDV) the composition is skewed to basic and acidic residues. Residue S509 is modified to Phosphoserine. Polar residues-rich tracts occupy residues 514-530 (DSTGPTKTTSSASSQTP) and 549-565 (VSISGNKGSSQPVQGVT).

Belongs to the PTEN phosphatase protein family. As to expression, expressed in seedlings, roots, stems, leaves, flowers and siliques. However, at protein level, not observed in older leaves and mature siliques.

It catalyses the reaction O-phospho-L-tyrosyl-[protein] + H2O = L-tyrosyl-[protein] + phosphate. The catalysed reaction is a 1,2-diacyl-sn-glycero-3-phospho-(1D-myo-inositol-3,4,5-trisphosphate) + H2O = a 1,2-diacyl-sn-glycero-3-phospho-(1D-myo-inositol-4,5-bisphosphate) + phosphate. Its function is as follows. Binds phosphatidic acid. Protein tyrosine phosphatase that also exhibits lipid phosphatase activity. Hydrolyzed poorly p-nitrophenyl phosphate (p-NPP). Can use PtdIns isomers as substrates. Removes efficiently phosphate from the D3 position of the inositol ring, less from the D4 position and not at all from the D5 position on monophosphorylated PtdIns isomers (PIPs). The presence of a phosphate group in the D5 position on PIP(2) isomers reduces lipid phosphatase activity. Mostly active on PtdIns(3)P and PtdIns(3,4)P(2), to a lower extent, on PtdIns(4)P and PtdIns(3,5)P(2), but barely against PtdIns(3,4,5)P(3) as substrate. This chain is Phosphatidylinositol 3,4,5-trisphosphate 3-phosphatase and protein-tyrosine-phosphatase PTEN2A, found in Arabidopsis thaliana (Mouse-ear cress).